Reading from the N-terminus, the 76-residue chain is Large ribosomal subunit protein bL31 (76 aa).

Belongs to the bacterial ribosomal protein bL31 family. Type A subfamily. As to quaternary structure, part of the 50S ribosomal subunit.

Its function is as follows. Binds the 23S rRNA. This chain is Large ribosomal subunit protein bL31, found in Gluconacetobacter diazotrophicus (strain ATCC 49037 / DSM 5601 / CCUG 37298 / CIP 103539 / LMG 7603 / PAl5).